Consider the following 122-residue polypeptide: UPF0102 protein Gmet_2864 (122 aa).

This sequence belongs to the UPF0102 family.

The chain is UPF0102 protein Gmet_2864 from Geobacter metallireducens (strain ATCC 53774 / DSM 7210 / GS-15).